A 130-amino-acid polypeptide reads, in one-letter code: Glycine cleavage system H protein (130 aa).

The Lipoyl-binding domain occupies 24 to 106; it reads TVTIGITDHA…YDEGWFFKVK (83 aa). Lys65 bears the N6-lipoyllysine mark.

This sequence belongs to the GcvH family. In terms of assembly, the glycine cleavage system is composed of four proteins: P, T, L and H. Requires (R)-lipoate as cofactor.

The glycine cleavage system catalyzes the degradation of glycine. The H protein shuttles the methylamine group of glycine from the P protein to the T protein. This is Glycine cleavage system H protein from Teredinibacter turnerae (strain ATCC 39867 / T7901).